A 445-amino-acid chain; its full sequence is FAS-associated factor 2 (445 aa).

Ala-2 carries the N-acetylalanine modification. One can recognise a UBA domain in the interval 12–48 (EQTEKLLQFQDLTGIESMDQCRHTLEQHNWNIEAAVQ). Residue Lys-167 is modified to N6-acetyllysine. The stretch at 275-350 (SERLEREERN…EEKERKLECL (76 aa)) forms a coiled coil. The interval 299-361 (ASLRADQEKE…PEPSPDDPES (63 aa)) is disordered. Over residues 303–348 (ADQEKERKKREERERKRRKEEEVQQQKLAEERRRRNLQEEKERKLE) the composition is skewed to basic and acidic residues. Residues 357 to 439 (DDPESVKIIF…GLSHTEVLFV (83 aa)) enclose the UBX domain.

As to quaternary structure, identified in a complex that contains SEL1L, OS9, FAF2/UBXD8, UBE2J1/UBC6E and AUP1. Interacts with YOD1. Interacts (via N-terminus) with UBQLN2 (via C-terminus). Interacts with PNPLA2 and UBAC2. Interacts with ZFAND2B; probably through VCP. Interacts with LMBR1L.

The protein resides in the cytoplasm. Its subcellular location is the lipid droplet. The protein localises to the endoplasmic reticulum. In terms of biological role, plays an important role in endoplasmic reticulum-associated degradation (ERAD) that mediates ubiquitin-dependent degradation of misfolded endoplasmic reticulum proteins. By controlling the steady-state expression of the IGF1R receptor, indirectly regulates the insulin-like growth factor receptor signaling pathway. Involved in inhibition of lipid droplet degradation by binding to phospholipase PNPL2 and inhibiting its activity by promoting dissociation of PNPL2 from its endogenous activator, ABHD5 which inhibits the rate of triacylglycerol hydrolysis. Involved in stress granule disassembly: associates with ubiquitinated G3BP1 in response to heat shock, thereby promoting interaction between ubiquitinated G3BP1 and VCP, followed by G3BP1 extraction from stress granules and stress granule disassembly. The chain is FAS-associated factor 2 (FAF2) from Bos taurus (Bovine).